A 702-amino-acid chain; its full sequence is Arylphorin subunit alpha (702 aa).

Positions 1-16 are cleaved as a signal peptide; the sequence is MKTVVILAGLVALALS. N-linked (GlcNAc...) asparagine glycosylation is found at Asn75 and Asn214.

The protein belongs to the hemocyanin family. Arylphorin is a hexamer of subunits alpha and beta. In terms of tissue distribution, fat body.

It localises to the secreted. The protein localises to the extracellular space. Functionally, arylphorin is a larval storage protein (LSP) which may serve as a storage protein used primarily as a source of aromatic amino acids for protein synthesis during metamorphosis. It is a constituent of the sclerotizing system of the cuticle, and serves as a carrier for ecdysteroid hormone. The polypeptide is Arylphorin subunit alpha (Manduca sexta (Tobacco hawkmoth)).